The chain runs to 347 residues: Ketol-acid reductoisomerase (NADP(+)) (347 aa).

The region spanning 3 to 182 is the KARI N-terminal Rossmann domain; that stretch reads TKMFYDKDID…GSGCAGILET (180 aa). Residues 26 to 29, Arg49, Ser53, and 83 to 86 each bind NADP(+); these read YGAQ and DELQ. His108 is an active-site residue. Residue Gly134 coordinates NADP(+). The 146-residue stretch at 183–328 folds into the KARI C-terminal knotted domain; the sequence is TFEEETTEDL…KKVRAMMPWI (146 aa). Mg(2+) contacts are provided by Asp191, Glu195, Glu227, and Glu231. Ser252 is a substrate binding site.

Belongs to the ketol-acid reductoisomerase family. The cofactor is Mg(2+).

The catalysed reaction is (2R)-2,3-dihydroxy-3-methylbutanoate + NADP(+) = (2S)-2-acetolactate + NADPH + H(+). It catalyses the reaction (2R,3R)-2,3-dihydroxy-3-methylpentanoate + NADP(+) = (S)-2-ethyl-2-hydroxy-3-oxobutanoate + NADPH + H(+). Its pathway is amino-acid biosynthesis; L-isoleucine biosynthesis; L-isoleucine from 2-oxobutanoate: step 2/4. The protein operates within amino-acid biosynthesis; L-valine biosynthesis; L-valine from pyruvate: step 2/4. Its function is as follows. Involved in the biosynthesis of branched-chain amino acids (BCAA). Catalyzes an alkyl-migration followed by a ketol-acid reduction of (S)-2-acetolactate (S2AL) to yield (R)-2,3-dihydroxy-isovalerate. In the isomerase reaction, S2AL is rearranged via a Mg-dependent methyl migration to produce 3-hydroxy-3-methyl-2-ketobutyrate (HMKB). In the reductase reaction, this 2-ketoacid undergoes a metal-dependent reduction by NADPH to yield (R)-2,3-dihydroxy-isovalerate. This Leuconostoc mesenteroides subsp. cremoris protein is Ketol-acid reductoisomerase (NADP(+)).